The primary structure comprises 270 residues: dTDP-6-deoxy-L-talose 4-dehydrogenase (NAD(+)) (270 aa).

Residues 11-12 (YI), 50-51 (DI), 72-76 (LAWQA), Asn-87, Thr-112, Tyr-135, and Lys-139 each bind NAD(+). Substrate-binding residues include Thr-112 and Tyr-135. Residue Tyr-135 is the Proton acceptor of the active site.

Belongs to the NAD(P)-dependent epimerase/dehydratase family.

It catalyses the reaction dTDP-6-deoxy-beta-L-talose + NAD(+) = dTDP-4-dehydro-beta-L-rhamnose + NADH + H(+). It participates in bacterial outer membrane biogenesis; LPS O-antigen biosynthesis. In terms of biological role, catalyzes the reduction of dTDP-6-deoxy-L-lyxo-4-hexulose to dTDP-6-deoxy-L-talose. The chain is dTDP-6-deoxy-L-talose 4-dehydrogenase (NAD(+)) (tll) from Aggregatibacter actinomycetemcomitans (Actinobacillus actinomycetemcomitans).